The sequence spans 957 residues: Glycine dehydrogenase (decarboxylating) (957 aa).

K708 carries the post-translational modification N6-(pyridoxal phosphate)lysine.

The protein belongs to the GcvP family. The glycine cleavage system is composed of four proteins: P, T, L and H. It depends on pyridoxal 5'-phosphate as a cofactor.

It catalyses the reaction N(6)-[(R)-lipoyl]-L-lysyl-[glycine-cleavage complex H protein] + glycine + H(+) = N(6)-[(R)-S(8)-aminomethyldihydrolipoyl]-L-lysyl-[glycine-cleavage complex H protein] + CO2. Functionally, the glycine cleavage system catalyzes the degradation of glycine. The P protein binds the alpha-amino group of glycine through its pyridoxal phosphate cofactor; CO(2) is released and the remaining methylamine moiety is then transferred to the lipoamide cofactor of the H protein. This chain is Glycine dehydrogenase (decarboxylating), found in Escherichia coli (strain K12 / MC4100 / BW2952).